The primary structure comprises 257 residues: MLAKRIIPCLDVRDGQVVKGVQFRNHEIIGDIVPLAKRYAEEGADELVFYDITASSDGRVVDKSWVARVAEVIDIPFCVAGGIKSAEDAARILEFGADKVSINSPALANPQLITDLADKFGVQCIVVGIDSYYDKDTGKYQVYQFTGDEERTKATKWETRDWVQEVQKRGAGEIVLNMMNQDGVRSGYDIEQLNMVREVCKVPLIASGGAGAMEHFAEAYQKANVDGALAASVFHKQVINIGELKQYLKQQGIEVRL.

Catalysis depends on residues Asp11 and Asp130.

The protein belongs to the HisA/HisF family. In terms of assembly, heterodimer of HisH and HisF.

Its subcellular location is the cytoplasm. It catalyses the reaction 5-[(5-phospho-1-deoxy-D-ribulos-1-ylimino)methylamino]-1-(5-phospho-beta-D-ribosyl)imidazole-4-carboxamide + L-glutamine = D-erythro-1-(imidazol-4-yl)glycerol 3-phosphate + 5-amino-1-(5-phospho-beta-D-ribosyl)imidazole-4-carboxamide + L-glutamate + H(+). It functions in the pathway amino-acid biosynthesis; L-histidine biosynthesis; L-histidine from 5-phospho-alpha-D-ribose 1-diphosphate: step 5/9. Its function is as follows. IGPS catalyzes the conversion of PRFAR and glutamine to IGP, AICAR and glutamate. The HisF subunit catalyzes the cyclization activity that produces IGP and AICAR from PRFAR using the ammonia provided by the HisH subunit. The polypeptide is Imidazole glycerol phosphate synthase subunit HisF (Vibrio parahaemolyticus serotype O3:K6 (strain RIMD 2210633)).